Consider the following 462-residue polypeptide: Chromosomal replication initiator protein DnaA (462 aa).

Residues Met1–Asn86 form a domain I, interacts with DnaA modulators region. Residues Asn86–Ser125 are domain II. The tract at residues Asn126–Ala342 is domain III, AAA+ region. ATP contacts are provided by Gly170, Gly172, Lys173, and Thr174. Residues Asn343 to Ser462 form a domain IV, binds dsDNA region.

The protein belongs to the DnaA family. As to quaternary structure, oligomerizes as a right-handed, spiral filament on DNA at oriC.

The protein localises to the cytoplasm. Its function is as follows. Plays an essential role in the initiation and regulation of chromosomal replication. ATP-DnaA binds to the origin of replication (oriC) to initiate formation of the DNA replication initiation complex once per cell cycle. Binds the DnaA box (a 9 base pair repeat at the origin) and separates the double-stranded (ds)DNA. Forms a right-handed helical filament on oriC DNA; dsDNA binds to the exterior of the filament while single-stranded (ss)DNA is stabiized in the filament's interior. The ATP-DnaA-oriC complex binds and stabilizes one strand of the AT-rich DNA unwinding element (DUE), permitting loading of DNA polymerase. After initiation quickly degrades to an ADP-DnaA complex that is not apt for DNA replication. Binds acidic phospholipids. This Photorhabdus laumondii subsp. laumondii (strain DSM 15139 / CIP 105565 / TT01) (Photorhabdus luminescens subsp. laumondii) protein is Chromosomal replication initiator protein DnaA.